A 93-amino-acid polypeptide reads, in one-letter code: Large ribosomal subunit protein uL23cz/uL23cy (93 aa).

The protein belongs to the universal ribosomal protein uL23 family. As to quaternary structure, part of the 50S ribosomal subunit.

It is found in the plastid. It localises to the chloroplast. Binds to 23S rRNA. The sequence is that of Large ribosomal subunit protein uL23cz/uL23cy (rpl23-A) from Gossypium barbadense (Sea Island cotton).